Consider the following 727-residue polypeptide: MPKNSKVTQREHSNEHVTESVADLLALEEPVDYKQSVLNVAGETGGKQKVAEEELDTEDRPAWNSKLQYILAQIGFSVGLGNIWRFPYLCQKNGGGAYLVPYLVLLIIIGIPLFFLELAVGQRIRRGSIGVWHYVCPRLGGIGFSSCIVCLFVGLYYNVIIGWSVFYFFKSFQYPLPWSECPVIRNGTVAVVEPECEKSSATTYFWYREALDISNSISESGGLNWKMTLCLLVAWSIVGMAVVKGIQSSGKVMYFSSLFPYVVLACFLVRGLLLRGAVDGILHMFTPKLDKMLDPQVWREAATQVFFALGLGFGGVIAFSSYNKQDNNCHFDAALVSFINFFTSVLATLVVFAVLGFKANIMNEKCVVENAEKILGYLNSNVLSRDLIPPHVNFSHLTTKDYSEMYSVIMTVKEKQFPALGLDPCLLEDELDKSVQGTGLAFIAFTEAMTHFPASPFWSVMFFLMLINLGLGSMIGTMAGITTPIIDTFKVPKEMFTVGCCVFAFFVGLLFVQRSGNYFVTMFDDYSATLPLTVIVILENIAVAWIYGTKKFMQELTEMLGFQPYRFYFYMWKFVSPLCMAVLTTASIIQLGVSPPGYSAWIKEEAAERYLYFPNWAMALLITLIAVATLPIPVVFILRHFHLLSDGSNTLSVSYKKGRMMKDISNLEENDETRFILSKVPSEAPSPMPTHRSYLGPGSTSPLDNSNNPNGRYGSGYLLASTPESEL.

The Cytoplasmic portion of the chain corresponds to 1–68 (MPKNSKVTQR…DRPAWNSKLQ (68 aa)). A phosphoserine mark is found at Ser13 and Ser20. Residues 69-89 (YILAQIGFSVGLGNIWRFPYL) form a helical membrane-spanning segment. The Extracellular segment spans residues 90–96 (CQKNGGG). The helical transmembrane segment at 97–116 (AYLVPYLVLLIIIGIPLFFL) threads the bilayer. The Cytoplasmic segment spans residues 117-140 (ELAVGQRIRRGSIGVWHYVCPRLG). Residues 141 to 161 (GIGFSSCIVCLFVGLYYNVII) traverse the membrane as a helical segment. Topologically, residues 162–224 (GWSVFYFFKS…NSISESGGLN (63 aa)) are extracellular. Asn186 carries an N-linked (GlcNAc...) asparagine glycan. Residues 225–243 (WKMTLCLLVAWSIVGMAVV) form a helical membrane-spanning segment. Residues 244–251 (KGIQSSGK) lie on the Cytoplasmic side of the membrane. The helical transmembrane segment at 252 to 269 (VMYFSSLFPYVVLACFLV) threads the bilayer. Residues 270 to 304 (RGLLLRGAVDGILHMFTPKLDKMLDPQVWREAATQ) are Extracellular-facing. A helical transmembrane segment spans residues 305 to 322 (VFFALGLGFGGVIAFSSY). The Cytoplasmic segment spans residues 323–333 (NKQDNNCHFDA). The chain crosses the membrane as a helical span at residues 334–355 (ALVSFINFFTSVLATLVVFAVL). Residues 356–451 (GFKANIMNEK…FIAFTEAMTH (96 aa)) are Extracellular-facing. Tyr377 is modified (phosphotyrosine). An N-linked (GlcNAc...) asparagine glycan is attached at Asn393. A helical transmembrane segment spans residues 452-471 (FPASPFWSVMFFLMLINLGL). Topologically, residues 472–494 (GSMIGTMAGITTPIIDTFKVPKE) are cytoplasmic. Residues 495-513 (MFTVGCCVFAFFVGLLFVQ) form a helical membrane-spanning segment. At 514 to 528 (RSGNYFVTMFDDYSA) the chain is on the extracellular side. The chain crosses the membrane as a helical span at residues 529-549 (TLPLTVIVILENIAVAWIYGT). Topologically, residues 550 to 569 (KKFMQELTEMLGFQPYRFYF) are cytoplasmic. The chain crosses the membrane as a helical span at residues 570–591 (YMWKFVSPLCMAVLTTASIIQL). The Extracellular segment spans residues 592-618 (GVSPPGYSAWIKEEAAERYLYFPNWAM). Residues 619 to 641 (ALLITLIAVATLPIPVVFILRHF) traverse the membrane as a helical segment. Topologically, residues 642 to 727 (HLLSDGSNTL…LLASTPESEL (86 aa)) are cytoplasmic. Phosphoserine occurs at positions 665 and 701. The disordered stretch occupies residues 680–727 (VPSEAPSPMPTHRSYLGPGSTSPLDNSNNPNGRYGSGYLLASTPESEL). A compositionally biased stretch (polar residues) spans 698–710 (GSTSPLDNSNNPN).

Belongs to the sodium:neurotransmitter symporter (SNF) (TC 2.A.22) family. As to expression, expressed in the brain. The strongest expression levels in embryonic, postnatal, and adult stages are found in both cortical and hippocampal tissues.

The protein localises to the cytoplasmic vesicle. It localises to the secretory vesicle. It is found in the synaptic vesicle membrane. The protein resides in the postsynapse. Its subcellular location is the presynapse. It carries out the reaction L-proline(in) + Na(+)(in) = L-proline(out) + Na(+)(out). It catalyses the reaction L-leucine(in) + Na(+)(in) = L-leucine(out) + Na(+)(out). The catalysed reaction is glycine(in) + Na(+)(in) = glycine(out) + Na(+)(out). The enzyme catalyses L-alanine(in) + Na(+)(in) = L-alanine(out) + Na(+)(out). It carries out the reaction L-glutamine(in) + Na(+)(in) = L-glutamine(out) + Na(+)(out). Functionally, synaptic vesicle transporter with apparent selectivity for neutral amino acids. The transport is sodium-coupled but chloride-independent, likely driven by the proton electrochemical gradient generated by vacuolar H(+)-ATPase in an overall electrogenic mechanism. May contribute to the synaptic uptake of neurotransmitter precursors in a process coupled in part to vesicle exocytosis. The polypeptide is Sodium-dependent neutral amino acid transporter SLC6A17 (Mus musculus (Mouse)).